The primary structure comprises 124 residues: Ribonuclease P protein subunit p14 (124 aa).

It belongs to the eukaryotic/archaeal RNase P protein component 2 family. In terms of assembly, RNase P consists of a catalytic RNA moiety and about 10 protein subunits; POP1, POP4, POP5, POP7, RPP14, RPP21, RPP25, RPP30, RPP38 and RPP40. Within the RNase P complex, POP1, POP7 and RPP25 form the 'finger' subcomplex, POP5, RPP14, RPP40 and homodimeric RPP30 form the 'palm' subcomplex, and RPP21, POP4 and RPP38 form the 'wrist' subcomplex. All subunits of the RNase P complex interact with the catalytic RNA.

It localises to the nucleus. It is found in the nucleolus. Component of ribonuclease P, a ribonucleoprotein complex that generates mature tRNA molecules by cleaving their 5'-ends. The sequence is that of Ribonuclease P protein subunit p14 (RPP14) from Homo sapiens (Human).